A 169-amino-acid polypeptide reads, in one-letter code: Sorting nexin-24 (169 aa).

The residue at position 1 (Met1) is an N-acetylmethionine. A PX domain is found at 1 to 125 (MEVYIPSFRH…SFDETESEES (125 aa)). Residues Arg38, Ser40, Lys61, and Arg74 each coordinate a 1,2-diacyl-sn-glycero-3-phospho-(1D-myo-inositol-3-phosphate). 2 positions are modified to phosphoserine: Ser113 and Ser116.

Belongs to the sorting nexin family.

The protein resides in the cytoplasmic vesicle membrane. Its function is as follows. May be involved in several stages of intracellular trafficking. This chain is Sorting nexin-24 (Snx24), found in Rattus norvegicus (Rat).